A 99-amino-acid chain; its full sequence is Acylphosphatase (99 aa).

Residues 5-97 (IRQVMVRGRV…YAGERFSILS (93 aa)) enclose the Acylphosphatase-like domain. Active-site residues include R20 and N38.

Belongs to the acylphosphatase family.

It catalyses the reaction an acyl phosphate + H2O = a carboxylate + phosphate + H(+). The protein is Acylphosphatase (acyP) of Rhodopseudomonas palustris (strain BisB5).